A 1101-amino-acid chain; its full sequence is Rho GTPase-activating protein 30 (1101 aa).

One can recognise a Rho-GAP domain in the interval Cys-20–Phe-215. 2 disordered regions span residues Arg-305–Leu-397 and Leu-450–Ser-499. Residues Leu-309–Ser-319 are compositionally biased toward basic and acidic residues. Residues Ser-348–Glu-367 show a composition bias toward low complexity. Residues Gln-451–Ser-465 show a composition bias toward pro residues. Ser-578 is modified (phosphoserine). Residues Leu-622–Glu-848 form a disordered region. 4 stretches are compositionally biased toward basic and acidic residues: residues Thr-659 to Ala-677, Glu-686 to Asp-762, Glu-786 to Asp-821, and Asp-829 to Asp-844. Phosphoserine is present on Ser-875. Disordered regions lie at residues Glu-878 to Ala-901 and Cys-968 to Ala-987. Ser-996 is subject to Phosphoserine. The segment at Ser-1044 to Val-1076 is disordered. Residues Arg-1052–Ser-1064 are compositionally biased toward basic and acidic residues.

In terms of assembly, interacts with RHOU in a GTP-independent manner.

It localises to the cytoplasmic vesicle. GTPase-activating protein (GAP) for RAC1 and RHOA, but not for CDC42. This is Rho GTPase-activating protein 30 (Arhgap30) from Mus musculus (Mouse).